The chain runs to 142 residues: MVLSPADKTNIKTAWEKIGSHGGEYGAEAVERMFLGFPTTKTYFPHFDFTHGSEQIKAHGKKVSEALTKAVGHLDDLPGALSTLSDLHAHKLRVDPVNFKLLSHCLLVTLANHHPSEFTPAVHASLDKFLANVSTVLTSKYR.

The Globin domain occupies 2–142; it reads VLSPADKTNI…VSTVLTSKYR (141 aa). The residue at position 4 (Ser-4) is a Phosphoserine. Residue Lys-8 is modified to N6-succinyllysine. At Thr-9 the chain carries Phosphothreonine. Lys-12 is subject to N6-succinyllysine. Position 17 is an N6-acetyllysine; alternate (Lys-17). Lys-17 is subject to N6-succinyllysine; alternate. At Tyr-25 the chain carries Phosphotyrosine. Lys-41 carries the N6-succinyllysine modification. His-59 is an O2 binding site. Residue His-88 coordinates heme b. Residue Ser-103 is modified to Phosphoserine. Thr-109 is modified (phosphothreonine). Ser-125 is subject to Phosphoserine. Residues Thr-135 and Thr-138 each carry the phosphothreonine modification. Ser-139 carries the phosphoserine modification.

This sequence belongs to the globin family. Heterotetramer of two alpha chains and two beta chains. Red blood cells.

Involved in oxygen transport from the lung to the various peripheral tissues. This is Hemoglobin subunit alpha-1/2 from Oryctolagus cuniculus (Rabbit).